Consider the following 146-residue polypeptide: Angiogenin (146 aa).

Residues 1-24 (MVMGLGLFLLVFMLGLGLTPPTLA) form the signal peptide. Pyrrolidone carboxylic acid is present on glutamine 25. Histidine 37 acts as the Proton acceptor in catalysis. Position 45 (arginine 45) interacts with tRNA. Intrachain disulfides connect cysteine 50-cysteine 105, cysteine 63-cysteine 116, and cysteine 81-cysteine 131. A Nucleolar localization signal motif is present at residues 55-59 (RRRGL). 2 residues coordinate tRNA: cysteine 105 and isoleucine 127. The active-site Proton donor is the histidine 138.

Belongs to the pancreatic ribonuclease family. As to quaternary structure, homodimer. Interacts with RNH1; inhibiting ANG ribonuclease activity. Interacts with PCNA.

It is found in the secreted. The protein localises to the nucleus. Its subcellular location is the nucleolus. It localises to the cytoplasm. The protein resides in the stress granule. Its activity is regulated as follows. Has weak tRNA ribonuclease activity by itself due to partial autoinhibition by its C-terminus, which folds into a short alpha-helix that partially occludes the substrate-binding site. In absence of stress, the ribonuclease activity is inhibited by RNH1 in the cytoplasm. In response to stress, dissociates from RNH1 in the cytoplasm and associates with cytoplasmic ribosomes with vacant A-sites: ribosomes directly activate the tRNA ribonuclease activity of ANG by refolding the C-terminal alpha-helix. In response to stress, the angiogenic activity of ANG is inhibited by RNH1 in the nucleus. In terms of biological role, secreted ribonuclease that can either promote or restrict cell proliferation of target cells, depending on the context. Endocytosed in target cells via its receptor PLXNB2 and translocates to the cytoplasm or nucleus. Under stress conditions, localizes to the cytoplasm and promotes the assembly of stress granules (SGs): specifically cleaves a subset of tRNAs within anticodon loops to produce tRNA-derived stress-induced fragments (tiRNAs), resulting in translation repression and inhibition of cell proliferation. tiRNas also prevent formation of apoptosome, thereby promoting cell survival. Preferentially cleaves RNAs between a pyrimidine and an adenosine residue, suggesting that it cleaves the anticodon loop of tRNA(Ala) (32-UUAGCAU-38) after positions 33 and 36. Cleaves a subset of tRNAs, including tRNA(Ala), tRNA(Glu), tRNA(Gly), tRNA(Lys), tRNA(Val), tRNA(His), tRNA(Asp) and tRNA(Sec). Under growth conditions and in differentiated cells, translocates to the nucleus and stimulates ribosomal RNA (rRNA) transcription, including that containing the initiation site sequences of 45S rRNA, thereby promoting cell growth and proliferation. Angiogenin induces vascularization of normal and malignant tissues via its ability to promote rRNA transcription. Involved in hematopoietic stem and progenitor cell (HSPC) growth and survival by promoting rRNA transcription in growth conditions and inhibiting translation in response to stress, respectively. Mediates the crosstalk between myeloid and intestinal epithelial cells to protect the intestinal epithelial barrier integrity: secreted by myeloid cells and promotes intestinal epithelial cells proliferation and survival. Also mediates osteoclast-endothelial cell crosstalk in growing bone: produced by osteoclasts and protects the neighboring vascular cells against senescence by promoting rRNA transcription. In Rhinopithecus avunculus (Tonkin snub-nosed monkey), this protein is Angiogenin (ANG).